A 209-amino-acid chain; its full sequence is Uracil phosphoribosyltransferase (209 aa).

Residues Arg79, Arg104, and Asp131–Ser139 each bind 5-phospho-alpha-D-ribose 1-diphosphate. Residues Ile194 and Gly199–Ala201 each bind uracil. Asp200 is a 5-phospho-alpha-D-ribose 1-diphosphate binding site.

Belongs to the UPRTase family. Mg(2+) is required as a cofactor.

The enzyme catalyses UMP + diphosphate = 5-phospho-alpha-D-ribose 1-diphosphate + uracil. Its pathway is pyrimidine metabolism; UMP biosynthesis via salvage pathway; UMP from uracil: step 1/1. Its activity is regulated as follows. Allosterically activated by GTP. Functionally, catalyzes the conversion of uracil and 5-phospho-alpha-D-ribose 1-diphosphate (PRPP) to UMP and diphosphate. The polypeptide is Uracil phosphoribosyltransferase (Rhizobium rhizogenes (strain K84 / ATCC BAA-868) (Agrobacterium radiobacter)).